We begin with the raw amino-acid sequence, 450 residues long: 6-phospho-beta-glucosidase (450 aa).

NAD(+) is bound at residue 5–73 (LKVVTIGGGS…VPMKLYKTLD (69 aa)). Substrate is bound by residues Arg96 and Asn150. The Mn(2+) site is built by Cys172 and His203. Catalysis depends on Tyr258, which acts as the Proton acceptor.

As to quaternary structure, homotetramer. It depends on NAD(+) as a cofactor. Requires Mn(2+) as cofactor. Co(2+) serves as cofactor. The cofactor is Ni(2+).

The enzyme catalyses 6-phospho-beta-D-glucosyl-(1-&gt;4)-D-glucose + H2O = D-glucose 6-phosphate + D-glucose. Functionally, hydrolyzes a wide variety of P-beta-glucosides including cellobiose-6P, salicin-6P, arbutin-6P, gentiobiose-6P, methyl-beta-glucoside-6P and p-nitrophenyl-beta-D-glucopyranoside-6P. Is also able to hydrolyze phospho-N,N'-diacetylchitobiose. In Escherichia coli (strain K12), this protein is 6-phospho-beta-glucosidase (chbF).